A 434-amino-acid chain; its full sequence is GTPase Obg (434 aa).

Positions 1–158 (MFLDTAKIKV…RELQLELKIL (158 aa)) constitute an Obg domain. One can recognise an OBG-type G domain in the interval 159–336 (ADVGLVGFPS…LLDATAELLD (178 aa)). GTP-binding positions include 165–172 (GFPSVGKS), 190–194 (FTTIV), 212–215 (DLPG), 282–285 (NKMD), and 317–319 (SGL). Residues Ser172 and Thr192 each contribute to the Mg(2+) site. The region spanning 356-434 (GFDEEEKAFE…IGKFEFEFVD (79 aa)) is the OCT domain.

The protein belongs to the TRAFAC class OBG-HflX-like GTPase superfamily. OBG GTPase family. In terms of assembly, monomer. Mg(2+) serves as cofactor.

The protein localises to the cytoplasm. Functionally, an essential GTPase which binds GTP, GDP and possibly (p)ppGpp with moderate affinity, with high nucleotide exchange rates and a fairly low GTP hydrolysis rate. Plays a role in control of the cell cycle, stress response, ribosome biogenesis and in those bacteria that undergo differentiation, in morphogenesis control. This Streptococcus pneumoniae (strain ATCC 700669 / Spain 23F-1) protein is GTPase Obg.